A 249-amino-acid chain; its full sequence is Chitooligosaccharide deacetylase (249 aa).

Residues His-61 and His-125 each contribute to the Mg(2+) site.

Belongs to the YdjC deacetylase family. ChbG subfamily. Homodimer. It depends on Mg(2+) as a cofactor.

The protein resides in the cytoplasm. The catalysed reaction is N,N'-diacetylchitobiose + H2O = N-acetyl-beta-D-glucosaminyl-(1-&gt;4)-D-glucosamine + acetate. It carries out the reaction diacetylchitobiose-6'-phosphate + H2O = N'-monoacetylchitobiose-6'-phosphate + acetate. Its pathway is glycan degradation; chitin degradation. Functionally, involved in the degradation of chitin. ChbG is essential for growth on the acetylated chitooligosaccharides chitobiose and chitotriose but is dispensable for growth on cellobiose and chitosan dimer, the deacetylated form of chitobiose. Deacetylation of chitobiose-6-P and chitotriose-6-P is necessary for both the activation of the chb promoter by the regulatory protein ChbR and the hydrolysis of phosphorylated beta-glucosides by the phospho-beta-glucosidase ChbF. Catalyzes the removal of only one acetyl group from chitobiose-6-P to yield monoacetylchitobiose-6-P, the inducer of ChbR and the substrate of ChbF. The polypeptide is Chitooligosaccharide deacetylase (Escherichia coli O9:H4 (strain HS)).